Consider the following 189-residue polypeptide: Elongation factor P (189 aa).

Lysine 34 carries the post-translational modification N6-(3,6-diaminohexanoyl)-5-hydroxylysine.

The protein belongs to the elongation factor P family. In terms of processing, may be beta-lysylated on the epsilon-amino group of Lys-34 by the combined action of EpmA and EpmB, and then hydroxylated on the C5 position of the same residue by EpmC (if this protein is present). Lysylation is critical for the stimulatory effect of EF-P on peptide-bond formation. The lysylation moiety may extend toward the peptidyltransferase center and stabilize the terminal 3-CCA end of the tRNA. Hydroxylation of the C5 position on Lys-34 may allow additional potential stabilizing hydrogen-bond interactions with the P-tRNA.

It is found in the cytoplasm. The protein operates within protein biosynthesis; polypeptide chain elongation. In terms of biological role, involved in peptide bond synthesis. Alleviates ribosome stalling that occurs when 3 or more consecutive Pro residues or the sequence PPG is present in a protein, possibly by augmenting the peptidyl transferase activity of the ribosome. Modification of Lys-34 is required for alleviation. The protein is Elongation factor P of Buchnera aphidicola subsp. Baizongia pistaciae (strain Bp).